Reading from the N-terminus, the 314-residue chain is L-lactate dehydrogenase (314 aa).

Residues Val-17, Asp-38, Lys-43, Tyr-69, and 83 to 84 (GA) contribute to the NAD(+) site. Substrate-binding residues include Gln-86 and Arg-92. NAD(+) contacts are provided by residues Ser-105, 122–124 (ASN), and Ser-147. 124–127 (NPVD) provides a ligand contact to substrate. Residue 152 to 155 (DSAR) coordinates substrate. 2 residues coordinate beta-D-fructose 1,6-bisphosphate: Arg-157 and His-172. Residue His-179 is the Proton acceptor of the active site. Phosphotyrosine is present on Tyr-223. Position 232 (Thr-232) interacts with substrate.

The protein belongs to the LDH/MDH superfamily. LDH family. In terms of assembly, homotetramer.

It localises to the cytoplasm. The catalysed reaction is (S)-lactate + NAD(+) = pyruvate + NADH + H(+). It functions in the pathway fermentation; pyruvate fermentation to lactate; (S)-lactate from pyruvate: step 1/1. Allosterically activated by fructose 1,6-bisphosphate (FBP). Its function is as follows. Catalyzes the conversion of lactate to pyruvate. The sequence is that of L-lactate dehydrogenase from Corynebacterium glutamicum (strain R).